Reading from the N-terminus, the 184-residue chain is MEGSGTEQKGSPKCSFLTNSLLCHENRQRLWRICNFIMFGFFSLAAYVQINDPDAEMWIVIYMIPAVLILFVSIKPDITGHVIWKLLADLHSAVCAVGAIYLSGCLYFYTSKNILHEEEGRELSGLLIISGWLLLCRKSHQSAIGAIRLIIAISVSTAPFFIWIYIYIDKEMRTSWPQHCKTVI.

A run of 5 helical transmembrane segments spans residues 30–50 (LWRI…YVQI), 54–74 (DAEM…FVSI), 82–102 (VIWK…AIYL), 121–137 (RELS…LLCR), and 149–169 (LIIA…IYID).

Its subcellular location is the membrane. This is Transmembrane protein 220 (tmem220) from Xenopus laevis (African clawed frog).